The primary structure comprises 382 residues: Anhydro-N-acetylmuramic acid kinase (382 aa).

An ATP-binding site is contributed by 22–29 (GTSMDGVD).

It belongs to the anhydro-N-acetylmuramic acid kinase family.

The enzyme catalyses 1,6-anhydro-N-acetyl-beta-muramate + ATP + H2O = N-acetyl-D-muramate 6-phosphate + ADP + H(+). It functions in the pathway amino-sugar metabolism; 1,6-anhydro-N-acetylmuramate degradation. The protein operates within cell wall biogenesis; peptidoglycan recycling. Functionally, catalyzes the specific phosphorylation of 1,6-anhydro-N-acetylmuramic acid (anhMurNAc) with the simultaneous cleavage of the 1,6-anhydro ring, generating MurNAc-6-P. Is required for the utilization of anhMurNAc either imported from the medium or derived from its own cell wall murein, and thus plays a role in cell wall recycling. This Burkholderia lata (strain ATCC 17760 / DSM 23089 / LMG 22485 / NCIMB 9086 / R18194 / 383) protein is Anhydro-N-acetylmuramic acid kinase.